Here is a 403-residue protein sequence, read N- to C-terminus: Aspartic endopeptidase PEP1 (403 aa).

Residues 1–20 form the signal peptide; sequence MVQISQIGAVLAVCSTLTVA. The propeptide at 21 to 67 is activation peptide; that stretch reads APTKGKARFNVPQVAVPMKAVHHPAVAYARALHKFGMKVPKAVSDAA. Positions 82–400 constitute a Peptidase A1 domain; that stretch reads YVTQVTVGQG…DTEGPRIGFA (319 aa). Aspartate 98 is a catalytic residue. N-linked (GlcNAc...) asparagine glycosylation is found at asparagine 159 and asparagine 270. Residue aspartate 293 is part of the active site. Cysteine 329 and cysteine 361 are oxidised to a cystine.

Belongs to the peptidase A1 family.

The protein resides in the secreted. It carries out the reaction Hydrolysis of proteins with broad specificity. Generally favors hydrophobic residues in P1 and P1', but also accepts Lys in P1, which leads to activation of trypsinogen. Does not clot milk.. In terms of biological role, secreted aspartic endopeptidase that allows assimilation of proteinaceous substrates. Can catalyze hydrolysis of the major structural proteins of basement membrane, elastin, collagen, and laminin. Thought to play a significant role in virulence. Can catalyze hydrolysis of the major structural proteins of basement membrane, elastin, collagen, and laminin. Thought to play a significant role in virulence. The chain is Aspartic endopeptidase PEP1 (PEP1) from Trichophyton verrucosum (strain HKI 0517).